A 397-amino-acid polypeptide reads, in one-letter code: MGEAVGEPSASGSGSCTGRSRRGCGRRAGRENLIGEHTDYNDGFVMPSALPHQVAAVSRRERRILRLHSADVDADPVELRVADLAPASDKSWTAYPSGVLWALREAGHELTGADVHLASTVPSGAGLSSSAALEVRPLAMNDLYALALRGWQLARLCQRAENVYVGAPVGIMDQTASACCRGGHALFLDTRDLSQRQIPFDLAAEGMRLLVVDTRVKHSHSEGEYGKRRAGCEKGAALLGVDALCDVPYADLDAALERLGDEEEVRRLVRHVVTEDERVERVVALLESGDTRRIGAVLVEGHASLRDDFRISCPELDLVVDTALASAALGRRMTGGGFGGSAIVLVEAAAVDAVTKAVEDAFAAAGLKRPRVFEAVPRRGAAPGLTVSRAASPACTP.

Residues 1-27 form a disordered region; the sequence is MGEAVGEPSASGSGSCTGRSRRGCGRR. A compositionally biased stretch (low complexity) spans 9–18; the sequence is SASGSGSCTG. 36 to 39 is a binding site for substrate; it reads EHTD. Residues S69 and 124 to 130 contribute to the ATP site; that span reads GAGLSSS. Mg(2+) contacts are provided by S130 and E161. The active-site Proton acceptor is D173. Y225 contacts substrate.

This sequence belongs to the GHMP kinase family. GalK subfamily.

It localises to the cytoplasm. It carries out the reaction alpha-D-galactose + ATP = alpha-D-galactose 1-phosphate + ADP + H(+). The protein operates within carbohydrate metabolism; galactose metabolism. Functionally, catalyzes the transfer of the gamma-phosphate of ATP to D-galactose to form alpha-D-galactose-1-phosphate (Gal-1-P). In Streptomyces lividans, this protein is Galactokinase.